The primary structure comprises 98 residues: UPF0235 protein CCNA_03737 (98 aa).

The protein belongs to the UPF0235 family.

This chain is UPF0235 protein CCNA_03737, found in Caulobacter vibrioides (strain NA1000 / CB15N) (Caulobacter crescentus).